Reading from the N-terminus, the 567-residue chain is MHGRLKVKTSEEQAEAKRLEREQKLKLYQSATQAVFQKREAGELDESVLELTSQILGANPDFATLWNCRREVLQQLETQKSPEELAALVKAELGFLESCLRVNPKSYGTWHHRCWLLSRLPEPNWARELELCARFLEADERNFHCWDYRRFVAAQAAVAPAEELAFTDSLITRNFSNYSSWHYRSCLLPQLHPQPDSGPQGRLPENVLLRELELVQNAFFTDPNDQSAWFYHRWLLGRAEPHDVLCCLHVSREEACLSVCFSRPLIVGSKMGTLLLTVDEAPLSVEWRTPDGRNRPSHVWLCDLPAASLNDHLPQHTFRVIWTGSDTQKECVLLKGHQECWCRDSATDEQLFRCELSVEKSTVLQSELESCKELQELEPENKWCLLTIILLMRALDPLLYEKETLEYFSTLKAVDPMRAAYLDDLRSKFLVENSVLKMEYADVRVLHLAHKDLTVLCHLEQLLLVTHLDLSHNRLRALPPALAALRCLEVLQASDNVLENLDGVANLPRLRELLLCNNRLQQSAALQTLASCPRLVFLNLQGNSLCQEEGIRERLAEMLPSVSSILT.

6 PFTA repeats span residues 44-78 (LDES…QLET), 88-122 (LVKA…RLPE), 124-158 (NWAR…QAAV), 159-193 (APAE…QLHP), 207-241 (VLLR…RAEP), and 363-397 (VLQS…ALDP). Residue S98 is modified to Phosphoserine. LRR repeat units lie at residues 442–463 (DVRV…EQLL), 464–486 (LVTH…AALR), 487–508 (CLEV…ANLP), 509–530 (RLRE…QTLA), and 534–555 (RLVF…RERL).

The protein belongs to the protein prenyltransferase subunit alpha family. Heterotrimer composed of RABGGTA, RABGGTB and CHM; within this trimer, RABGGTA and RABGGTB form the catalytic component B, while CHM (component A) mediates peptide substrate binding. The Rab GGTase dimer (RGGT) interacts with CHM (component A) prior to Rab protein binding; the association is stabilized by geranylgeranyl pyrophosphate (GGpp). The CHM:RGGT:Rab complex is destabilized by GGpp. Interacts with non-phosphorylated form of RAB8A; phosphorylation of RAB8A at 'Thr-72' disrupts this interaction.

The enzyme catalyses geranylgeranyl diphosphate + L-cysteinyl-[protein] = S-geranylgeranyl-L-cysteinyl-[protein] + diphosphate. The enzymatic reaction requires the aid of a Rab escort protein (also called component A), such as CHM. Functionally, catalyzes the transfer of a geranylgeranyl moiety from geranylgeranyl diphosphate to both cysteines of Rab proteins with the C-terminal sequence -XXCC, -XCXC and -CCXX, such as RAB1A, RAB3A, RAB5A and RAB7A. The sequence is that of Geranylgeranyl transferase type-2 subunit alpha (Rabggta) from Mus musculus (Mouse).